We begin with the raw amino-acid sequence, 147 residues long: Hemoglobin subunit gamma-2 (147 aa).

In terms of domain architecture, Globin spans 3 to 147 (NFTAEDKAAI…VASALGSRYH (145 aa)). At Thr-13 the chain carries Phosphothreonine. Ser-45, Ser-51, and Ser-53 each carry phosphoserine. Lys-60 carries the N6-acetyllysine modification. His-64 serves as a coordination point for heme b. Residue Lys-83 is modified to N6-acetyllysine. Residue His-93 coordinates heme b. An S-nitrosocysteine modification is found at Cys-94. 2 positions are modified to phosphoserine: Ser-140 and Ser-144.

This sequence belongs to the globin family. Heterotetramer of two alpha chains and two gamma chains in fetal hemoglobin (Hb F). As to expression, red blood cells.

In terms of biological role, gamma chains make up the fetal hemoglobin F, in combination with alpha chains. The protein is Hemoglobin subunit gamma-2 (HBG2) of Cebus albifrons (White-fronted capuchin).